Consider the following 119-residue polypeptide: Phosphoribosyl-AMP cyclohydrolase (119 aa).

Aspartate 77 contributes to the Mg(2+) binding site. Position 78 (cysteine 78) interacts with Zn(2+). Aspartate 79 and aspartate 81 together coordinate Mg(2+). Residues cysteine 94 and cysteine 101 each contribute to the Zn(2+) site.

It belongs to the PRA-CH family. Homodimer. It depends on Mg(2+) as a cofactor. Zn(2+) is required as a cofactor.

It is found in the cytoplasm. It catalyses the reaction 1-(5-phospho-beta-D-ribosyl)-5'-AMP + H2O = 1-(5-phospho-beta-D-ribosyl)-5-[(5-phospho-beta-D-ribosylamino)methylideneamino]imidazole-4-carboxamide. The protein operates within amino-acid biosynthesis; L-histidine biosynthesis; L-histidine from 5-phospho-alpha-D-ribose 1-diphosphate: step 3/9. Functionally, catalyzes the hydrolysis of the adenine ring of phosphoribosyl-AMP. This Cereibacter sphaeroides (strain ATCC 17029 / ATH 2.4.9) (Rhodobacter sphaeroides) protein is Phosphoribosyl-AMP cyclohydrolase.